We begin with the raw amino-acid sequence, 346 residues long: MNNQARTPAPSSARTSTSVRASTPTRTPTPLRTPTPVRTRTPIRTLTPVLTPSPAGTSPLVLTPAPAQIPTLVPTPALARIPRLVPPPAPAWIPTPVPTPVPVRNPTPVPTPARTLTPPVRVPAPAPAQLLAGIRAALPVLDSYLAPALPLDPPPEPAPELPLLPEEDPEPAPSLKLIPSVSSEAGPAPGPLPTRTPLAANSPGPTLDFTFRADPSAIGLADPPIPSPVPSPILGTIPSAISLQNCTETFPSSSENFALDKRVLIRVTYCGLUSYSLRYILLKKSLEQQFPNHLLFEEDRAAQATGEFEVFVNGRLVHSKKRGDGFVNESRLQKIVSVIDEEIKKR.

Disordered stretches follow at residues 1–40 (MNNQ…VRTR) and 151–206 (LDPP…PGPT). The segment covering 151 to 162 (LDPPPEPAPELP) has biased composition (pro residues). The cysteinyl-selenocysteine (Cys-Sec); redox-active cross-link spans 270-273 (CGLU). A non-standard amino acid (selenocysteine) is located at residue Sec273.

Belongs to the SelWTH family. Truncated SELENOV proteins produced by failed UGA/Sec decoding are ubiquitinated by the CRL2(APPBP2) complex, which recognizes the glycine (Gly) at the C-terminus of truncated SELENOV proteins. Testis specific.

Functionally, may be involved in a redox-related process. This Homo sapiens (Human) protein is Selenoprotein V.